The chain runs to 70 residues: U2-agatoxin-Ao1n (70 aa).

A signal peptide spans 1 to 20 (MRAIISLLLISAMVFYIIAA). The propeptide occupies 21-34 (VPEEEGLQLSEDER). Disulfide bonds link cysteine 37/cysteine 53, cysteine 44/cysteine 58, and cysteine 52/cysteine 68. Leucine 69 is subject to Leucine amide.

This sequence belongs to the neurotoxin 01 (U2-agtx) family. As to expression, expressed by the venom gland.

Its subcellular location is the secreted. Its function is as follows. Insect active toxin causing rapid but reversible paralysis in crickets. No activity shown in mammals. Does not show effect on mammalian voltage-gated calcium channels. In Agelena orientalis (Funnel-web spider), this protein is U2-agatoxin-Ao1n.